The primary structure comprises 208 residues: Protein-L-isoaspartate O-methyltransferase (208 aa).

Residue Ser59 is part of the active site.

The protein belongs to the methyltransferase superfamily. L-isoaspartyl/D-aspartyl protein methyltransferase family.

Its subcellular location is the cytoplasm. The catalysed reaction is [protein]-L-isoaspartate + S-adenosyl-L-methionine = [protein]-L-isoaspartate alpha-methyl ester + S-adenosyl-L-homocysteine. Functionally, catalyzes the methyl esterification of L-isoaspartyl residues in peptides and proteins that result from spontaneous decomposition of normal L-aspartyl and L-asparaginyl residues. It plays a role in the repair and/or degradation of damaged proteins. The sequence is that of Protein-L-isoaspartate O-methyltransferase from Erwinia tasmaniensis (strain DSM 17950 / CFBP 7177 / CIP 109463 / NCPPB 4357 / Et1/99).